Reading from the N-terminus, the 141-residue chain is Large ribosomal subunit protein uL11 (141 aa).

Belongs to the universal ribosomal protein uL11 family. Part of the ribosomal stalk of the 50S ribosomal subunit. Interacts with L10 and the large rRNA to form the base of the stalk. L10 forms an elongated spine to which L12 dimers bind in a sequential fashion forming a multimeric L10(L12)X complex. One or more lysine residues are methylated.

Forms part of the ribosomal stalk which helps the ribosome interact with GTP-bound translation factors. This chain is Large ribosomal subunit protein uL11, found in Roseiflexus castenholzii (strain DSM 13941 / HLO8).